Consider the following 170-residue polypeptide: Cyclic pyranopterin monophosphate synthase 1 (170 aa).

Substrate-binding positions include 79 to 81 (LCH) and 116 to 117 (ME). D131 is an active-site residue.

This sequence belongs to the MoaC family. In terms of assembly, homohexamer; trimer of dimers.

It carries out the reaction (8S)-3',8-cyclo-7,8-dihydroguanosine 5'-triphosphate = cyclic pyranopterin phosphate + diphosphate. It participates in cofactor biosynthesis; molybdopterin biosynthesis. In terms of biological role, catalyzes the conversion of (8S)-3',8-cyclo-7,8-dihydroguanosine 5'-triphosphate to cyclic pyranopterin monophosphate (cPMP). This Mycobacterium bovis (strain ATCC BAA-935 / AF2122/97) protein is Cyclic pyranopterin monophosphate synthase 1 (moaC1).